We begin with the raw amino-acid sequence, 242 residues long: Carboxy-S-adenosyl-L-methionine synthase (242 aa).

Residues tyrosine 39, 64-66 (GCS), 89-90 (DN), 117-118 (DI), asparagine 132, and arginine 199 contribute to the S-adenosyl-L-methionine site.

It belongs to the class I-like SAM-binding methyltransferase superfamily. Cx-SAM synthase family. In terms of assembly, homodimer.

It carries out the reaction prephenate + S-adenosyl-L-methionine = carboxy-S-adenosyl-L-methionine + 3-phenylpyruvate + H2O. Its function is as follows. Catalyzes the conversion of S-adenosyl-L-methionine (SAM) to carboxy-S-adenosyl-L-methionine (Cx-SAM). The polypeptide is Carboxy-S-adenosyl-L-methionine synthase (Aliivibrio fischeri (strain MJ11) (Vibrio fischeri)).